Reading from the N-terminus, the 345-residue chain is Phosphoribosylformylglycinamidine cyclo-ligase (345 aa).

The protein belongs to the AIR synthase family.

The protein localises to the cytoplasm. The enzyme catalyses 2-formamido-N(1)-(5-O-phospho-beta-D-ribosyl)acetamidine + ATP = 5-amino-1-(5-phospho-beta-D-ribosyl)imidazole + ADP + phosphate + H(+). The protein operates within purine metabolism; IMP biosynthesis via de novo pathway; 5-amino-1-(5-phospho-D-ribosyl)imidazole from N(2)-formyl-N(1)-(5-phospho-D-ribosyl)glycinamide: step 2/2. The chain is Phosphoribosylformylglycinamidine cyclo-ligase from Actinobacillus succinogenes (strain ATCC 55618 / DSM 22257 / CCUG 43843 / 130Z).